A 491-amino-acid polypeptide reads, in one-letter code: MTDLTALTLADAKEGLAAKSFTALELTDAHLAAMESARVLNAYVLETPDKARAMAKEADTRIAKGERSNLLGIPLGIKDLFATRDVRLTACSKILDDFKPPYESTITSQLWRDGAVLLGKLNNDEFAMGSSNETSAFGNVINPWRREGSDTALVPGGSSGGSAAAVAAGLCLGATGTDTGGSIRQPAAFTGIVGIKPTYGRCSRWGVVAFASSLDQAGPFARTVRDSAILLRSMAGHDPKDTTSVDRDVPDYEAAIGKSVKGMRIGIPREYRIGGMSSEIEKLWAQGAEWLKAAGAEIVEISLPHTKYALPAYYVVAPAEASSNLARYDGVRYGARVNGKTIAEMYENTRAAGFGPEVRRRIMIGTYVLSAGYYDAYYLRAQKVRTLIKRDFEEVFAKGIDAILTPATPSAAFGIGEKGKADPVEMYLNDIFTVTVNMAGLPGIAVPAGKDAQGLPLALQLIGRPFDEETLFSLGETIEQAAGRFEPKRWW.

Residues Lys78 and Ser158 each act as charge relay system in the active site. Ser182 functions as the Acyl-ester intermediate in the catalytic mechanism.

Belongs to the amidase family. GatA subfamily. Heterotrimer of A, B and C subunits.

The catalysed reaction is L-glutamyl-tRNA(Gln) + L-glutamine + ATP + H2O = L-glutaminyl-tRNA(Gln) + L-glutamate + ADP + phosphate + H(+). Allows the formation of correctly charged Gln-tRNA(Gln) through the transamidation of misacylated Glu-tRNA(Gln) in organisms which lack glutaminyl-tRNA synthetase. The reaction takes place in the presence of glutamine and ATP through an activated gamma-phospho-Glu-tRNA(Gln). This chain is Glutamyl-tRNA(Gln) amidotransferase subunit A, found in Afipia carboxidovorans (strain ATCC 49405 / DSM 1227 / KCTC 32145 / OM5) (Oligotropha carboxidovorans).